The primary structure comprises 541 residues: T-complex protein 1 subunit epsilon (541 aa).

N-acetylalanine is present on A2. A Glycyl lysine isopeptide (Lys-Gly) (interchain with G-Cter in SUMO2) cross-link involves residue K20. S26 carries the phosphoserine modification. G53 contributes to the ADP binding site. G53 provides a ligand contact to ATP. Position 104 (D104) interacts with Mg(2+). Residues G105, T106, T107, and S175 each contribute to the ADP site. The ATP site is built by T106 and T107. Glycyl lysine isopeptide (Lys-Gly) (interchain with G-Cter in SUMO2) cross-links involve residues K210, K214, K265, K275, and K279. Position 346 is a phosphoserine (S346). K392 is covalently cross-linked (Glycyl lysine isopeptide (Lys-Gly) (interchain with G-Cter in SUMO2)). G422, D492, E508, and K513 together coordinate ADP. ATP is bound at residue G422. Residue S539 is modified to Phosphoserine.

The protein belongs to the TCP-1 chaperonin family. Component of the chaperonin-containing T-complex (TRiC), a hexadecamer composed of two identical back-to-back stacked rings enclosing a protein folding chamber. Each ring is made up of eight different subunits: TCP1/CCT1, CCT2, CCT3, CCT4, CCT5, CCT6A/CCT6, CCT7, CCT8. Interacts with PACRG. Interacts with DNAAF4. Interacts with DLEC1. Interacts with SPMAP2. Ubiquitinated by the DCX(DCAF12) complex specifically recognizes the diglutamate (Glu-Glu) at the C-terminus, leading to its degradation.

The protein localises to the cytoplasm. The protein resides in the cytoskeleton. It is found in the microtubule organizing center. Its subcellular location is the centrosome. The catalysed reaction is ATP + H2O = ADP + phosphate + H(+). In terms of biological role, component of the chaperonin-containing T-complex (TRiC), a molecular chaperone complex that assists the folding of actin, tubulin and other proteins upon ATP hydrolysis. The TRiC complex mediates the folding of WRAP53/TCAB1, thereby regulating telomere maintenance. As part of the TRiC complex may play a role in the assembly of BBSome, a complex involved in ciliogenesis regulating transports vesicles to the cilia. The protein is T-complex protein 1 subunit epsilon (CCT5) of Homo sapiens (Human).